Reading from the N-terminus, the 531-residue chain is MLPITDRLLHLLGLEKTAFRIYAVSTLLLFLLFFLFRLLLRFLRLCRSFYITCRRLRCFPQPPRRNWLLGHLGMYLPNEAGLQDEKKVLDNMHHVLLVWMGPVLPLLVLVHPDYIKPLLGASAAIAPKDDLFYGFLKPWLGDGLLLSKGDKWSRHRRLLTPAFHFDILKPYMKIFNQSADIMHAKWRHLAEGSAVSLDMFEHISLMTLDSLQKCVFSYNSNCQEKMSDYISAIIELSALSVRRQYRLHHYLDFIYYRSADGRRFRQACDMVHHFTTEVIQERRRALRQQGAEAWLKAKQGKTLDFIDVLLLARDEDGKELSDEDIRAEADTFMFEGHDTTSSGISWMLFNLAKYPEYQEKCREEIQEVMKGRELEELEWDDLTQLPFTTMCIKESLRQYPPVTLVSRQCTEDIKLPDGRIIPKGIICLVSIYGTHHNPTVWPDSKVYNPYRFDPDNPQQRSPLAYVPFSAGPRNCIGQSFAMAELRVVVALTLLRFRLSVDRTRKVRRKPELILRTENGLWLKVEPLPPRA.

Over 1-22 the chain is Lumenal; that stretch reads MLPITDRLLHLLGLEKTAFRIY. A helical membrane pass occupies residues 23 to 43; that stretch reads AVSTLLLFLLFFLFRLLLRFL. The Cytoplasmic portion of the chain corresponds to 44 to 531; the sequence is RLCRSFYITC…LKVEPLPPRA (488 aa). Residues Glu-335 and Cys-475 each contribute to the heme site.

Belongs to the cytochrome P450 family. Heme is required as a cofactor.

Its subcellular location is the endoplasmic reticulum membrane. The protein resides in the microsome membrane. The enzyme catalyses triacontanoate + reduced [NADPH--hemoprotein reductase] + O2 = omega-hydroxy-triacontanoate + oxidized [NADPH--hemoprotein reductase] + H2O + H(+). The catalysed reaction is an omega-methyl-ultra-long-chain fatty acid + reduced [NADPH--hemoprotein reductase] + O2 = an omega-hydroxy-ultra-long-chain fatty acid + oxidized [NADPH--hemoprotein reductase] + H2O + H(+). Functionally, a cytochrome P450 monooxygenase involved in epidermal ceramide biosynthesis. Hydroxylates the terminal carbon (omega-hydroxylation) of ultra-long-chain fatty acyls (C28-C36) prior to ceramide synthesis. Contributes to the synthesis of three classes of omega-hydroxy-ultra-long chain fatty acylceramides having sphingosine, 6-hydroxysphingosine and phytosphingosine bases, all major lipid components that underlie the permeability barrier of the stratum corneum. Mechanistically, uses molecular oxygen inserting one oxygen atom into a substrate, and reducing the second into a water molecule, with two electrons provided by NADPH via cytochrome P450 reductase (CPR; NADPH-ferrihemoprotein reductase). This chain is Ultra-long-chain fatty acid omega-hydroxylase, found in Homo sapiens (Human).